Consider the following 305-residue polypeptide: Probable lipid kinase YegS-like (305 aa).

One can recognise a DAGKc domain in the interval 1 to 129 (MTQRRAMLIL…VDLGEVGGKL (129 aa)). ATP-binding positions include Thr39, 65 to 71 (GDGTLRD), and Thr92. Residues Leu210, Asp213, and Leu215 each coordinate Mg(2+). Glu268 serves as the catalytic Proton acceptor.

It belongs to the diacylglycerol/lipid kinase family. YegS lipid kinase subfamily. Mg(2+) serves as cofactor. The cofactor is Ca(2+).

It is found in the cytoplasm. Its function is as follows. Probably phosphorylates lipids; the in vivo substrate is unknown. This Pseudomonas syringae pv. tomato (strain ATCC BAA-871 / DC3000) protein is Probable lipid kinase YegS-like.